The primary structure comprises 127 residues: DNA-directed RNA polymerase subunit omega (127 aa).

This sequence belongs to the RNA polymerase subunit omega family. As to quaternary structure, the RNAP catalytic core consists of 2 alpha, 1 beta, 1 beta' and 1 omega subunit. When a sigma factor is associated with the core the holoenzyme is formed, which can initiate transcription.

It catalyses the reaction RNA(n) + a ribonucleoside 5'-triphosphate = RNA(n+1) + diphosphate. Functionally, promotes RNA polymerase assembly. Latches the N- and C-terminal regions of the beta' subunit thereby facilitating its interaction with the beta and alpha subunits. This Rickettsia typhi (strain ATCC VR-144 / Wilmington) protein is DNA-directed RNA polymerase subunit omega.